The sequence spans 451 residues: Bifunctional protein GlmU (451 aa).

The tract at residues 1-236 is pyrophosphorylase; that stretch reads MDQTPSYSPP…YEELRGINSK (236 aa). Residues 17–20, Lys-31, Gln-79, 84–85, 105–107, Gly-144, Glu-162, Asn-177, and Asn-234 contribute to the UDP-N-acetyl-alpha-D-glucosamine site; these read LAAG, GT, and YGD. A Mg(2+)-binding site is contributed by Asp-107. Asn-234 provides a ligand contact to Mg(2+). The segment at 237-257 is linker; it reads VELAEAEATVQIVLRRKALEN. The interval 258–451 is N-acetyltransferase; it reads GVTMTAPETV…EIRRQLKGSV (194 aa). Positions 323 and 341 each coordinate UDP-N-acetyl-alpha-D-glucosamine. His-353 functions as the Proton acceptor in the catalytic mechanism. 2 residues coordinate UDP-N-acetyl-alpha-D-glucosamine: Tyr-356 and Asn-367. Acetyl-CoA-binding positions include Ala-370, 376 to 377, Ser-395, Ala-413, and Arg-430; that span reads NY.

The protein in the N-terminal section; belongs to the N-acetylglucosamine-1-phosphate uridyltransferase family. This sequence in the C-terminal section; belongs to the transferase hexapeptide repeat family. Homotrimer. Mg(2+) is required as a cofactor.

Its subcellular location is the cytoplasm. It catalyses the reaction alpha-D-glucosamine 1-phosphate + acetyl-CoA = N-acetyl-alpha-D-glucosamine 1-phosphate + CoA + H(+). The enzyme catalyses N-acetyl-alpha-D-glucosamine 1-phosphate + UTP + H(+) = UDP-N-acetyl-alpha-D-glucosamine + diphosphate. Its pathway is nucleotide-sugar biosynthesis; UDP-N-acetyl-alpha-D-glucosamine biosynthesis; N-acetyl-alpha-D-glucosamine 1-phosphate from alpha-D-glucosamine 6-phosphate (route II): step 2/2. The protein operates within nucleotide-sugar biosynthesis; UDP-N-acetyl-alpha-D-glucosamine biosynthesis; UDP-N-acetyl-alpha-D-glucosamine from N-acetyl-alpha-D-glucosamine 1-phosphate: step 1/1. It participates in bacterial outer membrane biogenesis; LPS lipid A biosynthesis. Its function is as follows. Catalyzes the last two sequential reactions in the de novo biosynthetic pathway for UDP-N-acetylglucosamine (UDP-GlcNAc). The C-terminal domain catalyzes the transfer of acetyl group from acetyl coenzyme A to glucosamine-1-phosphate (GlcN-1-P) to produce N-acetylglucosamine-1-phosphate (GlcNAc-1-P), which is converted into UDP-GlcNAc by the transfer of uridine 5-monophosphate (from uridine 5-triphosphate), a reaction catalyzed by the N-terminal domain. In Granulibacter bethesdensis (strain ATCC BAA-1260 / CGDNIH1), this protein is Bifunctional protein GlmU.